A 120-amino-acid polypeptide reads, in one-letter code: Large ribosomal subunit protein uL18 (120 aa).

The protein belongs to the universal ribosomal protein uL18 family. In terms of assembly, part of the 50S ribosomal subunit; part of the 5S rRNA/L5/L18/L25 subcomplex. Contacts the 5S and 23S rRNAs.

This is one of the proteins that bind and probably mediate the attachment of the 5S RNA into the large ribosomal subunit, where it forms part of the central protuberance. The sequence is that of Large ribosomal subunit protein uL18 from Nitrobacter hamburgensis (strain DSM 10229 / NCIMB 13809 / X14).